We begin with the raw amino-acid sequence, 902 residues long: Cytosolic 10-formyltetrahydrofolate dehydrogenase (902 aa).

A hydrolase domain region spans residues 1–310 (MKIAVIGQSL…PASQYYKTAD (310 aa)). Residue 88–90 (QFI) coordinates (6R)-10-formyltetrahydrofolate. Catalysis depends on H106, which acts as the Proton donor. Residue D142 coordinates (6R)-10-formyltetrahydrofolate. Residues 318 to 395 (DEEKKFSEEI…EFIQMVVRRL (78 aa)) enclose the Carrier domain. Residue S354 is modified to O-(pantetheine 4'-phosphoryl)serine. An aldehyde dehydrogenase domain region spans residues 417–902 (TVKIPHQLFI…LKTKAVTIEY (486 aa)). NADP(+)-binding positions include 571–573 (IPW), 597–600 (KPAQ), 630–635 (GSLIGQ), 650–651 (GS), and 673–674 (EL). The active-site Proton acceptor is the E673. C707 (proton donor) is an active-site residue. Residues K757 and 804–806 (ESF) contribute to the NADP(+) site.

It in the N-terminal section; belongs to the GART family. This sequence in the C-terminal section; belongs to the aldehyde dehydrogenase family. ALDH1L subfamily. As to quaternary structure, homotetramer. Post-translationally, phosphopantetheinylation at Ser-354 by AASDHPPT is required for the formyltetrahydrofolate dehydrogenase activity.

The protein localises to the cytoplasm. It is found in the cytosol. It carries out the reaction (6R)-10-formyltetrahydrofolate + NADP(+) + H2O = (6S)-5,6,7,8-tetrahydrofolate + CO2 + NADPH + H(+). Functionally, cytosolic 10-formyltetrahydrofolate dehydrogenase that catalyzes the NADP(+)-dependent conversion of 10-formyltetrahydrofolate to tetrahydrofolate and carbon dioxide. May also have an NADP(+)-dependent aldehyde dehydrogenase activity towards formaldehyde, acetaldehyde, propionaldehyde, and benzaldehyde. Regulates reduced folate pools as well as glycine metabolism. This is Cytosolic 10-formyltetrahydrofolate dehydrogenase (aldh1l1) from Xenopus tropicalis (Western clawed frog).